Consider the following 345-residue polypeptide: Probable velvet family sexual development regulator LACBIDRAFT_317102 (345 aa).

2 stretches are compositionally biased toward polar residues: residues 1 to 13 and 24 to 38; these read MFTT…SYRS and EIQN…NPPR. 3 disordered regions span residues 1–43, 138–189, and 310–345; these read MFTT…TRRR, ESWT…SPSS, and RKRR…SDED. One can recognise a Velvet domain in the interval 62-306; the sequence is GQTIRAELDE…ARWGVRLNIR (245 aa). Composition is skewed to low complexity over residues 141–158 and 167–184; these read TSRS…PTLS and SSPQ…ASTP. Residues 336-345 show a composition bias toward acidic residues; it reads SEDDEASDED.

It belongs to the velvet family.

It is found in the nucleus. In terms of biological role, velvet-domain-containing protein that probably acts as a positive regulator of sexual development. The chain is Probable velvet family sexual development regulator LACBIDRAFT_317102 from Laccaria bicolor (strain S238N-H82 / ATCC MYA-4686) (Bicoloured deceiver).